A 335-amino-acid chain; its full sequence is Aspartate--ammonia ligase (335 aa).

It belongs to the class-II aminoacyl-tRNA synthetase family. AsnA subfamily.

The protein localises to the cytoplasm. It carries out the reaction L-aspartate + NH4(+) + ATP = L-asparagine + AMP + diphosphate + H(+). It participates in amino-acid biosynthesis; L-asparagine biosynthesis; L-asparagine from L-aspartate (ammonia route): step 1/1. This chain is Aspartate--ammonia ligase, found in Pediococcus pentosaceus (strain ATCC 25745 / CCUG 21536 / LMG 10740 / 183-1w).